The chain runs to 238 residues: NAD(P)H-hydrate epimerase (238 aa).

Residues 10-225 (AIKVDQILFN…ALQRQYELNL (216 aa)) enclose the YjeF N-terminal domain. (6S)-NADPHX is bound at residue 68 to 72 (NNGGD). 2 residues coordinate K(+): Asn-69 and Asp-133. (6S)-NADPHX contacts are provided by residues 137-143 (GFSFKPP) and Asp-166. A K(+)-binding site is contributed by Ser-169.

This sequence belongs to the NnrE/AIBP family. K(+) is required as a cofactor.

The catalysed reaction is (6R)-NADHX = (6S)-NADHX. It catalyses the reaction (6R)-NADPHX = (6S)-NADPHX. Its function is as follows. Catalyzes the epimerization of the S- and R-forms of NAD(P)HX, a damaged form of NAD(P)H that is a result of enzymatic or heat-dependent hydration. This is a prerequisite for the S-specific NAD(P)H-hydrate dehydratase to allow the repair of both epimers of NAD(P)HX. This chain is NAD(P)H-hydrate epimerase, found in Drosophila willistoni (Fruit fly).